We begin with the raw amino-acid sequence, 361 residues long: Dihydroorotate dehydrogenase (quinone) (361 aa).

FMN contacts are provided by residues 67-71 and Thr91; that span reads AGLDK. Lys71 lines the substrate pocket. 116–120 lines the substrate pocket; that stretch reads NRMGF. FMN-binding residues include Asn145 and Asn178. Asn178 lines the substrate pocket. Ser181 serves as the catalytic Nucleophile. Asn183 contacts substrate. Positions 223 and 251 each coordinate FMN. 252–253 is a binding site for substrate; sequence NT. FMN is bound by residues Gly273, Gly302, and 323–324; that span reads YT.

It belongs to the dihydroorotate dehydrogenase family. Type 2 subfamily. Monomer. The cofactor is FMN.

Its subcellular location is the cell membrane. The enzyme catalyses (S)-dihydroorotate + a quinone = orotate + a quinol. The protein operates within pyrimidine metabolism; UMP biosynthesis via de novo pathway; orotate from (S)-dihydroorotate (quinone route): step 1/1. Functionally, catalyzes the conversion of dihydroorotate to orotate with quinone as electron acceptor. This chain is Dihydroorotate dehydrogenase (quinone), found in Deinococcus geothermalis (strain DSM 11300 / CIP 105573 / AG-3a).